The sequence spans 304 residues: Oxygen-dependent coproporphyrinogen-III oxidase (304 aa).

Substrate is bound at residue Ser93. Residues His97 and His107 each contribute to the a divalent metal cation site. The Proton donor role is filled by His107. Substrate is bound at residue 109 to 111; sequence NVR. Residues His146 and His176 each contribute to the a divalent metal cation site. The tract at residues 241–276 is important for dimerization; sequence YVEFNLVYDRGTLFGLQSGGRTESILMSLPPQVRWG. 259 to 261 contributes to the substrate binding site; the sequence is GGR.

Belongs to the aerobic coproporphyrinogen-III oxidase family. As to quaternary structure, homodimer. It depends on a divalent metal cation as a cofactor.

It localises to the cytoplasm. It carries out the reaction coproporphyrinogen III + O2 + 2 H(+) = protoporphyrinogen IX + 2 CO2 + 2 H2O. The protein operates within porphyrin-containing compound metabolism; protoporphyrin-IX biosynthesis; protoporphyrinogen-IX from coproporphyrinogen-III (O2 route): step 1/1. Involved in the heme biosynthesis. Catalyzes the aerobic oxidative decarboxylation of propionate groups of rings A and B of coproporphyrinogen-III to yield the vinyl groups in protoporphyrinogen-IX. The sequence is that of Oxygen-dependent coproporphyrinogen-III oxidase from Pseudomonas syringae pv. syringae (strain B728a).